The primary structure comprises 507 residues: Lysine--tRNA ligase (507 aa).

Positions 406 and 413 each coordinate Mg(2+).

This sequence belongs to the class-II aminoacyl-tRNA synthetase family. In terms of assembly, homodimer. Mg(2+) serves as cofactor.

It is found in the cytoplasm. The enzyme catalyses tRNA(Lys) + L-lysine + ATP = L-lysyl-tRNA(Lys) + AMP + diphosphate. The polypeptide is Lysine--tRNA ligase (Wolinella succinogenes (strain ATCC 29543 / DSM 1740 / CCUG 13145 / JCM 31913 / LMG 7466 / NCTC 11488 / FDC 602W) (Vibrio succinogenes)).